The sequence spans 558 residues: Formate--tetrahydrofolate ligase (558 aa).

66–73 lines the ATP pocket; it reads TPAGEGKT.

The protein belongs to the formate--tetrahydrofolate ligase family.

It carries out the reaction (6S)-5,6,7,8-tetrahydrofolate + formate + ATP = (6R)-10-formyltetrahydrofolate + ADP + phosphate. It participates in one-carbon metabolism; tetrahydrofolate interconversion. This chain is Formate--tetrahydrofolate ligase, found in Clostridioides difficile (strain 630) (Peptoclostridium difficile).